A 93-amino-acid polypeptide reads, in one-letter code: Small hydrophobic protein (93 aa).

2 consecutive transmembrane segments (helical) span residues 5-25 (LIII…VLAY) and 32-52 (AFGP…IYFP).

The protein resides in the membrane. The polypeptide is Small hydrophobic protein (Tupaia virus (isolate Tupaia/Thailand/-/1986) (TUPV)).